Reading from the N-terminus, the 120-residue chain is UPF0295 protein Exig_0660 (120 aa).

2 consecutive transmembrane segments (helical) span residues 16–36 (AMFL…LKQF) and 41–61 (VILM…YFLI).

It belongs to the UPF0295 family.

The protein resides in the cell membrane. The chain is UPF0295 protein Exig_0660 from Exiguobacterium sibiricum (strain DSM 17290 / CCUG 55495 / CIP 109462 / JCM 13490 / 255-15).